A 120-amino-acid polypeptide reads, in one-letter code: uncharacterized protein (120 aa).

Its subcellular location is the virion. This is an uncharacterized protein from Acanthamoeba polyphaga mimivirus (APMV).